Reading from the N-terminus, the 446-residue chain is Ribosomal protein uS12 methylthiotransferase RimO (446 aa).

Residues 7–118 (PKIAFAHLGC…IVEVIERVER (112 aa)) form the MTTase N-terminal domain. Residues Cys16, Cys52, Cys81, Cys156, Cys160, and Cys163 each contribute to the [4Fe-4S] cluster site. In terms of domain architecture, Radical SAM core spans 142–371 (TTPAPVAYLR…MELQQPIAQR (230 aa)). A TRAM domain is found at 374–440 (AAEVGKIVPV…IYDLYGIIPA (67 aa)).

Belongs to the methylthiotransferase family. RimO subfamily. Requires [4Fe-4S] cluster as cofactor.

Its subcellular location is the cytoplasm. It catalyses the reaction L-aspartate(89)-[ribosomal protein uS12]-hydrogen + (sulfur carrier)-SH + AH2 + 2 S-adenosyl-L-methionine = 3-methylsulfanyl-L-aspartate(89)-[ribosomal protein uS12]-hydrogen + (sulfur carrier)-H + 5'-deoxyadenosine + L-methionine + A + S-adenosyl-L-homocysteine + 2 H(+). In terms of biological role, catalyzes the methylthiolation of an aspartic acid residue of ribosomal protein uS12. The sequence is that of Ribosomal protein uS12 methylthiotransferase RimO from Thermosynechococcus vestitus (strain NIES-2133 / IAM M-273 / BP-1).